Here is an 869-residue protein sequence, read N- to C-terminus: MEEAAPCSEPAKTIKRIDRESVHRICSGQVVLSLGTAVKELVENSLDAGATNIDVRLKDHGAELIEVSDNGGGVEEENFEGLTLKHYTSKIQDFSDLIHVETFGFRGEALSSLCALSDVTISTCHKSAKVGTRLVFDHNGKITQKAPYPRQQGTTVSIQQLFHTLPVRHKEFQRNIKKEYAKMVQILQAYCIISKGVRINCTNQVGQGKKSPVVSTTGGPNLKENIGAVFGKKQLQSLIPFVQLPPNEAVCEEYGLKSTDLPEKLYSITGFISRCDHGVGRSTTDRQFFFINQRPCDPAKVVKLVNEVYHLYNKHQYPFIVLNICVDSECVDINVTPDKRQILLQEEKLLLAILKTSLIEMFGSDVNKLNVNQNLLDIVGNVKAPPGDAEKPWVEMSHHSETENPSSEGKRVMTLSRLRESFSLHQTESYFQSPKKVKQRHSSSKQLSLDTILSTVRTQKAVLSEDSESCHEMKSKMPVPRKYLRKVDDIDSGFCSTSESDAGYNTPEAGSCVISESVNNPIEEEFCSSEEQHQNEYLKTVGHSEKSLECDIQVLGTEHKLNRVNDCNNQTNLPQEATNSLPRVRRFKNEADDFKAGIHPKVENTRNYMPCVDVLVEVKKKTVPLEFSMKALAERVRKIVQQQQKCTETQNYRRFRAKISPGENKVAEDELRKEISKEMFAKMEIIGQFNLGFIIAKLNSDLFIIDQHATDEKYNFEMLQQHTVLQGQKLIAPQNLNLTAVNETVLIENLEIFRKNGFDFVINENAPVTQRVKLISLPTSKNWTFGPQDIDELIFMLSDCPGVMCRPSRVRQMFASRACRKSVMIGTALNVQEMKKLVTHMGEIEHPWNCPHGRPTMRHIASLDLIASE.

The ATP site is built by N44, D69, E108, A109, and L110. Residues 585–588 (RRFK) carry the Nuclear localization signal motif.

This sequence belongs to the DNA mismatch repair MutL/HexB family.

The protein resides in the nucleus. The catalysed reaction is ATP + H2O = ADP + phosphate + H(+). Component of the post-replicative DNA mismatch repair system (MMR). Involved in B cell growth by positively regulating B cell proliferation and controlling replication efficiency. Controls cell cycle to prevent re-replication and defects in DNA damage-induced G2 checkpoint. Doesn't seem to counteract or control the immunoglobulin gene conversion (Ig GC) and to contribute to guanine/uracil mismatch repair. Possesses an ATPase activity, but in the absence of gross structural changes, ATP hydrolysis may not be necessary for proficient mismatch repair. In Gallus gallus (Chicken), this protein is Mismatch repair endonuclease PMS2.